We begin with the raw amino-acid sequence, 257 residues long: MLARRIIPCLDVKDGVVVKGIQFRNHEVMGDIVPLAKRYADEGADELVFYDITASSDARVVDKSWVSRVAEVIDIPFCVAGGIKSVEDAKRILEFGADKVSINSPALENPALITELADRFGVQCIVVGIDSYFDAATGQYQVKQYTGDENRTRITKWTTPDWVVEVQKRGAGEIVLNMMNQDGVRQGYDLTQLKLIRDLCKVPLIASGGAGEMVHFRDAFQIADVDGALAASVFHKGIIPIPELKAYLRNEGVQIRD.

Active-site residues include Asp-11 and Asp-130.

Belongs to the HisA/HisF family. Heterodimer of HisH and HisF.

Its subcellular location is the cytoplasm. It catalyses the reaction 5-[(5-phospho-1-deoxy-D-ribulos-1-ylimino)methylamino]-1-(5-phospho-beta-D-ribosyl)imidazole-4-carboxamide + L-glutamine = D-erythro-1-(imidazol-4-yl)glycerol 3-phosphate + 5-amino-1-(5-phospho-beta-D-ribosyl)imidazole-4-carboxamide + L-glutamate + H(+). The protein operates within amino-acid biosynthesis; L-histidine biosynthesis; L-histidine from 5-phospho-alpha-D-ribose 1-diphosphate: step 5/9. In terms of biological role, IGPS catalyzes the conversion of PRFAR and glutamine to IGP, AICAR and glutamate. The HisF subunit catalyzes the cyclization activity that produces IGP and AICAR from PRFAR using the ammonia provided by the HisH subunit. This chain is Imidazole glycerol phosphate synthase subunit HisF, found in Tolumonas auensis (strain DSM 9187 / NBRC 110442 / TA 4).